The following is a 260-amino-acid chain: Triosephosphate isomerase (260 aa).

11-13 provides a ligand contact to substrate; the sequence is NWK. The Electrophile role is filled by H103. E175 functions as the Proton acceptor in the catalytic mechanism. Substrate-binding positions include G181, S220, and 241–242; that span reads GG.

The protein belongs to the triosephosphate isomerase family. Homodimer.

The protein resides in the cytoplasm. It catalyses the reaction D-glyceraldehyde 3-phosphate = dihydroxyacetone phosphate. It participates in carbohydrate biosynthesis; gluconeogenesis. Its pathway is carbohydrate degradation; glycolysis; D-glyceraldehyde 3-phosphate from glycerone phosphate: step 1/1. Its function is as follows. Involved in the gluconeogenesis. Catalyzes stereospecifically the conversion of dihydroxyacetone phosphate (DHAP) to D-glyceraldehyde-3-phosphate (G3P). The chain is Triosephosphate isomerase from Shewanella sp. (strain W3-18-1).